A 403-amino-acid polypeptide reads, in one-letter code: Probable N-acetyltransferase HLS1 (403 aa).

The region spanning 2–177 (TVVREYDPTR…VNPVYAHRVN (176 aa)) is the N-acetyltransferase domain.

Belongs to the acetyltransferase family.

Ethylene-responsive N-acetyltransferase required for differential cell elongation in the hypocotyl. Regulates apical hook formation of dark-grown seedlings. May control differential cell growth by regulating auxin activity. May be involved in negative feedback regulation of auxin homeostasis through the control of GH3-like genes. Modulates de novo shoot organogenesis. The chain is Probable N-acetyltransferase HLS1 (HLS1) from Arabidopsis thaliana (Mouse-ear cress).